Here is a 161-residue protein sequence, read N- to C-terminus: Pro-corazonin (161 aa).

The N-terminal stretch at 1–20 (MMRLLLLPLFLFTLSMACMG) is a signal peptide. Q21 carries the post-translational modification Pyrrolidone carboxylic acid. N31 bears the Asparagine amide mark. The propeptide occupies 70 to 161 (LERCLAQLQR…SGEPSVFGKH (92 aa)). Disordered regions lie at residues 93–125 (NANRPEPDSSDSGSSRNRANNNNENVLYPTPIQ) and 142–161 (VAGSGPTGAGSGEPSVFGKH). The span at 102-117 (SDSGSSRNRANNNNEN) shows a compositional bias: low complexity.

Belongs to the corazonin family.

It localises to the secreted. Its function is as follows. Cardioactive peptide. Corazonin is probably involved in the physiological regulation of the heart beat. Clock (Clk) and cycle (cyc) proteins negatively regulate Crz transcription in a cell-specific manner. The polypeptide is Pro-corazonin (Drosophila pseudoobscura pseudoobscura (Fruit fly)).